The sequence spans 331 residues: MNLKNRHFLKLLDFTPEEITAYLDLAAELKDAKKAGREIQRMKGKNIALIFEKTSTRTRCAFEVAARDQGADRTYLEPSASQIGHKESIKDTARVLGRMYDAIEYRGFAQETVEELAKYAGVPVFNGLTNEFHPTQMLADALTMREHSGKPLNQTAFAYVGDARYNMGNSLLILGAKLGMDVRIGAPQSLWPSEGIIAAAHAAAKETGAKITLTENAHEAVKGVGFIHTDVWVSMGEPKEVWQERIDLLKDYRVTPELMAASGNPQVKFMHCLPAFHNRETKVGEWIYETFGLNGVEVTEEVFESPAGIVFDQAENRMHTIKAVMVAALGD.

Carbamoyl phosphate is bound by residues 55–58 (STRT), glutamine 82, arginine 106, and 133–136 (HPTQ). Residues asparagine 166, aspartate 230, and 234–235 (SM) contribute to the L-ornithine site. Carbamoyl phosphate-binding positions include 272-273 (CL) and arginine 317.

Belongs to the aspartate/ornithine carbamoyltransferase superfamily. OTCase family.

It is found in the cytoplasm. The enzyme catalyses carbamoyl phosphate + L-ornithine = L-citrulline + phosphate + H(+). Its pathway is amino-acid biosynthesis; L-arginine biosynthesis; L-arginine from L-ornithine and carbamoyl phosphate: step 1/3. Reversibly catalyzes the transfer of the carbamoyl group from carbamoyl phosphate (CP) to the N(epsilon) atom of ornithine (ORN) to produce L-citrulline. This Neisseria gonorrhoeae protein is Ornithine carbamoyltransferase (argF).